Reading from the N-terminus, the 95-residue chain is Fluoride-specific ion channel FluC 1 (95 aa).

3 helical membrane passes run 23–43, 49–69, and 70–90; these read LIDAPLALLGINLLGSFLMGW, LWGTGFLGGFTSFSAFALLMF, and DGAYLYAAVTVIGCVAAWLLG. Na(+)-binding residues include glycine 56 and threonine 59.

The protein belongs to the fluoride channel Fluc/FEX (TC 1.A.43) family.

It localises to the cell membrane. The enzyme catalyses fluoride(in) = fluoride(out). Na(+) is not transported, but it plays an essential structural role and its presence is essential for fluoride channel function. In terms of biological role, fluoride-specific ion channel. Important for reducing fluoride concentration in the cell, thus reducing its toxicity. This Corynebacterium diphtheriae (strain ATCC 700971 / NCTC 13129 / Biotype gravis) protein is Fluoride-specific ion channel FluC 1.